The chain runs to 562 residues: Apical membrane antigen 1 (562 aa).

Positions 1-21 (MNKIYCILFLSAQCLVHMGKC) are cleaved as a signal peptide. Residues 22 to 484 (EPNQKPSRLT…QYAQGESKNQ (463 aa)) lie on the Extracellular side of the membrane. 2 N-linked (GlcNAc...) asparagine glycosylation sites follow: Asn-84 and Asn-176. Intrachain disulfides connect Cys-94–Cys-247, Cys-162–Cys-192, Cys-208–Cys-220, Cys-265–Cys-363, Cys-282–Cys-354, Cys-388–Cys-444, Cys-432–Cys-449, and Cys-434–Cys-451. Asn-226 carries N-linked (GlcNAc...) asparagine glycosylation. 2 N-linked (GlcNAc...) asparagine glycosylation sites follow: Asn-405 and Asn-441. The helical transmembrane segment at 485–507 (MLLIIIGITGGVCVVALASMFYF) threads the bilayer. Topologically, residues 508–562 (RKKAHNDKYDKMEQADGYGKPTTRKDEMLDPEASFWGEEKRASHTTPVLMEKPYY) are cytoplasmic. The tract at residues 519–543 (MEQADGYGKPTTRKDEMLDPEASFW) is disordered.

It belongs to the apicomplexan parasites AMA1 family.

The protein localises to the membrane. Functionally, involved in parasite invasion of erythrocytes. This chain is Apical membrane antigen 1 (AMA-1), found in Plasmodium fragile.